The primary structure comprises 141 residues: Hemoglobin subunit alpha (141 aa).

The Globin domain maps to 1 to 141 (VLSPADKSNV…VSTVLTSKYR (141 aa)). S3 carries the phosphoserine modification. N6-succinyllysine is present on residues K7 and K11. K16 bears the N6-acetyllysine; alternate mark. N6-succinyllysine; alternate is present on K16. Phosphotyrosine is present on Y24. S35 carries the post-translational modification Phosphoserine. An N6-succinyllysine modification is found at K40. S49 is subject to Phosphoserine. Position 58 (H58) interacts with O2. Position 87 (H87) interacts with heme b. Position 102 is a phosphoserine (S102). Phosphothreonine is present on T108. 2 positions are modified to phosphoserine: S124 and S131. Residues T134 and T137 each carry the phosphothreonine modification. Position 138 is a phosphoserine (S138).

Belongs to the globin family. As to quaternary structure, heterotetramer of two alpha chains and two beta chains. As to expression, red blood cells.

Functionally, involved in oxygen transport from the lung to the various peripheral tissues. In terms of biological role, hemopressin acts as an antagonist peptide of the cannabinoid receptor CNR1. Hemopressin-binding efficiently blocks cannabinoid receptor CNR1 and subsequent signaling. This chain is Hemoglobin subunit alpha (HBA), found in Mico argentatus (Silvery marmoset).